The primary structure comprises 176 residues: NAD(P)H-quinone oxidoreductase subunit 6, chloroplastic (176 aa).

5 helical membrane passes run 10-30 (ILML…VLLT), 33-53 (IYSA…YFLL), 60-80 (VAQL…AVMF), 95-115 (IGDG…MTTI), and 152-172 (FYLP…GAIT).

This sequence belongs to the complex I subunit 6 family. In terms of assembly, NDH is composed of at least 16 different subunits, 5 of which are encoded in the nucleus.

It localises to the plastid. The protein localises to the chloroplast thylakoid membrane. The catalysed reaction is a plastoquinone + NADH + (n+1) H(+)(in) = a plastoquinol + NAD(+) + n H(+)(out). The enzyme catalyses a plastoquinone + NADPH + (n+1) H(+)(in) = a plastoquinol + NADP(+) + n H(+)(out). Functionally, NDH shuttles electrons from NAD(P)H:plastoquinone, via FMN and iron-sulfur (Fe-S) centers, to quinones in the photosynthetic chain and possibly in a chloroplast respiratory chain. The immediate electron acceptor for the enzyme in this species is believed to be plastoquinone. Couples the redox reaction to proton translocation, and thus conserves the redox energy in a proton gradient. In Lolium perenne (Perennial ryegrass), this protein is NAD(P)H-quinone oxidoreductase subunit 6, chloroplastic (ndhG).